The primary structure comprises 432 residues: Meiotically up-regulated gene 134 protein (432 aa).

Belongs to the UPF0300 family.

Its subcellular location is the cytoplasm. It is found in the cell cortex. Its function is as follows. Has a role in meiosis. This chain is Meiotically up-regulated gene 134 protein (mug134), found in Schizosaccharomyces pombe (strain 972 / ATCC 24843) (Fission yeast).